The sequence spans 632 residues: Acyl-coenzyme A oxidase-like protein (632 aa).

376-381 (TGGMGY) is a binding site for FAD.

It belongs to the acyl-CoA oxidase family. FAD serves as cofactor.

The polypeptide is Acyl-coenzyme A oxidase-like protein (Acoxl) (Mus musculus (Mouse)).